The chain runs to 321 residues: Probable arabinan endo-1,5-alpha-L-arabinosidase C (321 aa).

Positions Met1–Ala18 are cleaved as a signal peptide. The active-site Proton acceptor is the Asp33. Asn192 carries an N-linked (GlcNAc...) asparagine glycan. Glu200 acts as the Proton donor in catalysis. Asn224 is a glycosylation site (N-linked (GlcNAc...) asparagine).

This sequence belongs to the glycosyl hydrolase 43 family.

The protein localises to the secreted. It catalyses the reaction Endohydrolysis of (1-&gt;5)-alpha-arabinofuranosidic linkages in (1-&gt;5)-arabinans.. It participates in glycan metabolism; L-arabinan degradation. In terms of biological role, endo-1,5-alpha-L-arabinanase involved in degradation of pectin. Its preferred substrate is linear 1,5-alpha-L-arabinan. The chain is Probable arabinan endo-1,5-alpha-L-arabinosidase C (abnC) from Aspergillus fumigatus (strain CBS 144.89 / FGSC A1163 / CEA10) (Neosartorya fumigata).